The following is a 993-amino-acid chain: MINKAIAKIFGTQNEREIKRLMPIVAQINALEPQVKQFSDDQLRAKTDEFRAKIQERLAKYEEAEHKNHALKEVLDEILPEAFAICREAGWRVLNMRHFDVQLIGGMVLHSGRISEMKTGEGKTLVATLPVYLNALSGRGVHVVTVNDYLAKRDSEWMGKLYNFLGLSVGVIVHDLDDDQRREAYRADVTYGTNNEFGFDYLRDNMKFELSDCVQREFNFAIVDEVDSILIDEARTPLIISGASEESTDKYQRVNVIIPRLEKGEEIEGREPGDKILTGDYVVDEKHKTITVSDDGWEKVEKLLGIGNIADPENWDLKHHVEVAIKAHALYHVDVEYVVKDGEVLIVDEFTGRLMPGRRWSDGLHQAVEAKEGVKVERENQTLATITFQNYFRLYKKLAGMTGTAETEAAEFDKIYKLEVVVIPTNRTLLRKENPDVVYRTEKEKFFAVADEIAKLSVSQQPVLVGTVSIEKSERLSELLKRKNIKHVVLNAKFHEREAEYVAQAGRLGQVTIATNMAGRGTDILLGGNPEFMAKQETLKKGVAQPVHAAGGEVDARPDDPNTVYWYYAGNEYVCPRAQWEEILAHYKTQTDFEHEQVKQAGGLFILGTERHESRRIDNQLRGRAGRQGDPGASRFYLSLEDDLMRIFAKEWVSTLLQRLGMEEGVPIESKMISRRIEKAQEAVEAQNFEARKHLLEYDDVMNKQRMAVYGLRRQLLEGLDQKELIIDEYVTEILGDLLDKFAPTEKHPEDWDIAGLKGEIFTRFGVDIIAEGVEPEKLNRMQLGDGIFDKLKERYEAKEQLIGNDQMRHHERVIMLSVIDQLWKDHLLNMDHLKEGIGLRGYAQHDPLVEYKRESFDMFEGMMATFKEQTVRYLYLMQIIDAATNMPVEIPRRRAPENVRELGPVLEAENAPEPQISGGNGQQPPQRRQQTSLDDLEKQFERKKKRELEQARMAGGGMPDAVQQVVRSGDKIGRNDPCFCGSGKKYKKCHGA.

ATP contacts are provided by residues Gln102, 120 to 124 (GEGKT), and Asp523. The segment at 910–962 (ENAPEPQISGGNGQQPPQRRQQTSLDDLEKQFERKKKRELEQARMAGGGMPDA) is disordered. Over residues 936 to 951 (DLEKQFERKKKRELEQ) the composition is skewed to basic and acidic residues. Zn(2+)-binding residues include Cys979, Cys981, Cys990, and His991.

This sequence belongs to the SecA family. As to quaternary structure, monomer and homodimer. Part of the essential Sec protein translocation apparatus which comprises SecA, SecYEG and auxiliary proteins SecDF. Other proteins may also be involved. Zn(2+) serves as cofactor.

The protein resides in the cell inner membrane. It is found in the cytoplasm. It catalyses the reaction ATP + H2O + cellular proteinSide 1 = ADP + phosphate + cellular proteinSide 2.. Its function is as follows. Part of the Sec protein translocase complex. Interacts with the SecYEG preprotein conducting channel. Has a central role in coupling the hydrolysis of ATP to the transfer of proteins into and across the cell membrane, serving as an ATP-driven molecular motor driving the stepwise translocation of polypeptide chains across the membrane. In Koribacter versatilis (strain Ellin345), this protein is Protein translocase subunit SecA.